Consider the following 259-residue polypeptide: 5'-nucleotidase SurE (259 aa).

Positions 13, 14, 44, and 101 each coordinate a divalent metal cation.

Belongs to the SurE nucleotidase family. It depends on a divalent metal cation as a cofactor.

It localises to the cytoplasm. It carries out the reaction a ribonucleoside 5'-phosphate + H2O = a ribonucleoside + phosphate. Its function is as follows. Nucleotidase that shows phosphatase activity on nucleoside 5'-monophosphates. In Flavobacterium johnsoniae (strain ATCC 17061 / DSM 2064 / JCM 8514 / BCRC 14874 / CCUG 350202 / NBRC 14942 / NCIMB 11054 / UW101) (Cytophaga johnsonae), this protein is 5'-nucleotidase SurE.